The sequence spans 373 residues: Chaperone protein DnaJ (373 aa).

One can recognise a J domain in the interval 5–69; that stretch reads DYYEVLGVNK…NKRANYDQFG (65 aa). The CR-type zinc finger occupies 130–212; the sequence is GTKKEISIKK…CKGKGTENKT (83 aa). The Zn(2+) site is built by Cys143, Cys146, Cys160, Cys163, Cys186, Cys189, Cys200, and Cys203. CXXCXGXG motif repeat units follow at residues 143–150, 160–167, 186–193, and 200–207; these read CHTCNGDG, CSYCNGAG, CPKCEGSG, and CPTCKGKG.

This sequence belongs to the DnaJ family. As to quaternary structure, homodimer. It depends on Zn(2+) as a cofactor.

The protein localises to the cytoplasm. Its function is as follows. Participates actively in the response to hyperosmotic and heat shock by preventing the aggregation of stress-denatured proteins and by disaggregating proteins, also in an autonomous, DnaK-independent fashion. Unfolded proteins bind initially to DnaJ; upon interaction with the DnaJ-bound protein, DnaK hydrolyzes its bound ATP, resulting in the formation of a stable complex. GrpE releases ADP from DnaK; ATP binding to DnaK triggers the release of the substrate protein, thus completing the reaction cycle. Several rounds of ATP-dependent interactions between DnaJ, DnaK and GrpE are required for fully efficient folding. Also involved, together with DnaK and GrpE, in the DNA replication of plasmids through activation of initiation proteins. The protein is Chaperone protein DnaJ of Staphylococcus epidermidis (strain ATCC 12228 / FDA PCI 1200).